Consider the following 883-residue polypeptide: NF-X1-type zinc finger protein NFXL2 (883 aa).

The span at 1 to 10 (MTNMAGTATT) shows a compositional bias: polar residues. Positions 1–44 (MTNMAGTATTEFRWKSPPQPPSQEQPISDSDSDSGSDSENHQHR) are disordered. An RING-type; degenerate zinc finger spans residues 87–152 (CLICLERIKR…EAVWNCPKCR (66 aa)). NF-X1-type zinc fingers lie at residues 198 to 216 (CGHC…SCPK), 250 to 269 (CNIH…PCRE), 303 to 322 (CGKH…LCPY), 357 to 377 (CGYH…TCRI), 410 to 429 (CARH…PCSE), 437 to 456 (CRNH…PCPI), 494 to 515 (CRHG…PCRL), 523 to 568 (CGHK…RCPE), 605 to 636 (CGNH…KCDL), 646 to 664 (CQHP…PCKT), and 709 to 738 (CTHL…RCKC). The tract at residues 798–824 (EIEEKEEPSGKNASKRRKRRGRGQDIQ) is disordered. A helical transmembrane segment spans residues 841–863 (MVVMLVAMLAAVSYYGYKGLLWL).

It belongs to the NFX1 family. In terms of assembly, interacts with ADO1/ZTL. Constitutively expressed in mesophyll and guard cells.

It is found in the nucleus. The protein resides in the membrane. It functions in the pathway protein modification; protein ubiquitination. Probable transcriptional regulator. May mediate E2- or E3-dependent ubiquitination. Required to gate light sensitivity during the night. Regulates the speed of the clock by acting in the feedback loop between CCA1, LHY and APRR1/TOC1. Promotes the expression of CCA1 at night but not by days. This activational effect is enhanced by interaction with ADO1/ZTL. Association with ADO1/ZTL is not leading to the degradation of NFXL2. Confers sensitivity to osmotic stress such as high salinity. Prevents H(2)O(2) production and abscisic acid accumulation. Part of a regulatory network that integrates the biosynthesis and action of abscisic acid, reactive oxygen species and cuticle components. The polypeptide is NF-X1-type zinc finger protein NFXL2 (NFXL2) (Arabidopsis thaliana (Mouse-ear cress)).